Here is a 400-residue protein sequence, read N- to C-terminus: Serine/threonine transporter SstT (400 aa).

The next 8 membrane-spanning stretches (helical) occupy residues 14-34 (IIIA…VTPY), 48-68 (SVAP…FQVG), 76-96 (VLLL…IASL), 136-156 (AISE…GLAM), 177-197 (IIHK…AVTF), 211-231 (LLAV…PILV), 293-313 (LAGA…TLGI), and 334-354 (ASGV…LFGI).

Belongs to the dicarboxylate/amino acid:cation symporter (DAACS) (TC 2.A.23) family.

It is found in the cell inner membrane. The catalysed reaction is L-serine(in) + Na(+)(in) = L-serine(out) + Na(+)(out). It carries out the reaction L-threonine(in) + Na(+)(in) = L-threonine(out) + Na(+)(out). In terms of biological role, involved in the import of serine and threonine into the cell, with the concomitant import of sodium (symport system). In Acinetobacter baumannii (strain SDF), this protein is Serine/threonine transporter SstT.